The chain runs to 641 residues: Chaperone protein DnaK (641 aa).

Thr200 carries the phosphothreonine; by autocatalysis modification. Positions 605-623 (AAEQGGSADAASGNAQASK) are enriched in low complexity. The tract at residues 605-628 (AAEQGGSADAASGNAQASKAADDV) is disordered.

Belongs to the heat shock protein 70 family.

Acts as a chaperone. The chain is Chaperone protein DnaK from Xanthomonas oryzae pv. oryzae (strain KACC10331 / KXO85).